Here is a 186-residue protein sequence, read N- to C-terminus: dTTP/UTP pyrophosphatase (186 aa).

The active-site Proton acceptor is the D67.

It belongs to the Maf family. YhdE subfamily. A divalent metal cation is required as a cofactor.

Its subcellular location is the cytoplasm. It catalyses the reaction dTTP + H2O = dTMP + diphosphate + H(+). The catalysed reaction is UTP + H2O = UMP + diphosphate + H(+). In terms of biological role, nucleoside triphosphate pyrophosphatase that hydrolyzes dTTP and UTP. May have a dual role in cell division arrest and in preventing the incorporation of modified nucleotides into cellular nucleic acids. The sequence is that of dTTP/UTP pyrophosphatase from Carboxydothermus hydrogenoformans (strain ATCC BAA-161 / DSM 6008 / Z-2901).